Consider the following 315-residue polypeptide: tRNA wybutosine-synthesizing protein 5 (315 aa).

The JmjC domain occupies 102–267 (DEKYYLRSLG…YDTTDTYGNK (166 aa)). Tyr-106 contacts 2-oxoglutarate. His-160 and Asp-162 together coordinate Fe cation. 2-oxoglutarate-binding residues include Asn-166 and Lys-175. His-235 contacts Fe cation.

The protein belongs to the TYW5 family. Homodimer. Requires Fe(2+) as cofactor.

It carries out the reaction 7-[(3S)-3-amino-3-carboxypropyl]wyosine(37) in tRNA(Phe) + 2-oxoglutarate + O2 = 7-(2-hydroxy-3-amino-3-carboxypropyl)wyosine(37) in tRNA(Phe) + succinate + CO2. Its pathway is tRNA modification; wybutosine-tRNA(Phe) biosynthesis. TRNA hydroxylase that acts as a component of the wybutosine biosynthesis pathway. Wybutosine is a hyper modified guanosine with a tricyclic base found at the 3'-position adjacent to the anticodon of eukaryotic phenylalanine tRNA. Catalyzes the hydroxylation of 7-(a-amino-a-carboxypropyl)wyosine (yW-72) into undermodified hydroxywybutosine (OHyW*). OHyW* being further transformed into hydroxywybutosine (OHyW) by LCMT2/TYW4. OHyW is a derivative of wybutosine found in higher eukaryotes. This Mus musculus (Mouse) protein is tRNA wybutosine-synthesizing protein 5 (Tyw5).